Here is a 251-residue protein sequence, read N- to C-terminus: Probable transcriptional regulatory protein MAB_2888c (251 aa).

The segment at 1–20 is disordered; that stretch reads MSGHSKWATTKHQKAVKDAR.

The protein belongs to the TACO1 family.

It localises to the cytoplasm. This chain is Probable transcriptional regulatory protein MAB_2888c, found in Mycobacteroides abscessus (strain ATCC 19977 / DSM 44196 / CCUG 20993 / CIP 104536 / JCM 13569 / NCTC 13031 / TMC 1543 / L948) (Mycobacterium abscessus).